We begin with the raw amino-acid sequence, 355 residues long: MPSLAEEICIGNLGSLQTLPESFTWKLTAADSLLRPSSAVSFDAVEESIPVIDLSNPDVTTLIGDASKTWGAFQIANHGISQKLLDDIESLSKTLFDMPSERKLEAASSDKGVSGYGEPRISPFFEKKMWSEGFTIADDSYRNHFNTLWPHDHTKYCGIIQEYVDEMEKLASRLLYCILGSLGVTVEDIEWAHKLEKSGSKVGRGAIRLNHYPVCPEPERAMGLAAHTDSTILTILHQSNTGGLQVFREESGWVTVEPAPGVLVVNIGDLFHILSNGKIPSVVHRAKVNHTRSRISIAYLWGGPAGDVQIAPISKLTGPAEPSLYRSITWKEYLQIKYEVFDKAMDAIRVVNPTN.

The region spanning 203–303 (GRGAIRLNHY…RISIAYLWGG (101 aa)) is the Fe2OG dioxygenase domain. Fe cation contacts are provided by histidine 227, aspartate 229, and histidine 284. Residue arginine 294 is part of the active site.

This sequence belongs to the iron/ascorbate-dependent oxidoreductase family. GA3OX subfamily. It depends on L-ascorbate as a cofactor. Fe cation serves as cofactor. Expressed in siliques and in seeds, specifically at the rim of the embryo and the outer integument. Also expressed in flowers. Not detected in roots, stems and leaves.

The enzyme catalyses gibberellin A20 + 2-oxoglutarate + O2 = gibberellin A1 + succinate + CO2. It functions in the pathway plant hormone biosynthesis; gibberellin biosynthesis. In terms of biological role, converts the inactive gibberellin (GA) precursors GA9 and GA20 in the bioactives gibberellins GA4 and GA1. Involved in the production of bioactive GA for reproductive development. In Arabidopsis thaliana (Mouse-ear cress), this protein is Gibberellin 3-beta-dioxygenase 4.